The chain runs to 500 residues: Cytochrome P450 71B34 (500 aa).

Residues 1–21 traverse the membrane as a helical segment; sequence MTNIWLLSLIFVICILVAVFN. Position 440 (Cys440) interacts with heme.

This sequence belongs to the cytochrome P450 family. It depends on heme as a cofactor.

The protein resides in the membrane. The chain is Cytochrome P450 71B34 (CYP71B34) from Arabidopsis thaliana (Mouse-ear cress).